We begin with the raw amino-acid sequence, 237 residues long: Demethylmenaquinone methyltransferase (237 aa).

Residues threonine 58, aspartate 79, and 106-107 (NA) contribute to the S-adenosyl-L-methionine site.

It belongs to the class I-like SAM-binding methyltransferase superfamily. MenG/UbiE family.

It catalyses the reaction a 2-demethylmenaquinol + S-adenosyl-L-methionine = a menaquinol + S-adenosyl-L-homocysteine + H(+). The protein operates within quinol/quinone metabolism; menaquinone biosynthesis; menaquinol from 1,4-dihydroxy-2-naphthoate: step 2/2. In terms of biological role, methyltransferase required for the conversion of demethylmenaquinol (DMKH2) to menaquinol (MKH2). In Anoxybacillus flavithermus (strain DSM 21510 / WK1), this protein is Demethylmenaquinone methyltransferase.